A 256-amino-acid chain; its full sequence is Pimeloyl-[acyl-carrier protein] methyl ester esterase (256 aa).

Residues 15–242 (HLVLLHGWGL…AAHAPFISHP (228 aa)) enclose the AB hydrolase-1 domain. Substrate contacts are provided by residues Trp22, 82–83 (SL), and 143–147 (FLALQ). Ser82 serves as the catalytic Nucleophile. Residues Asp207 and His235 contribute to the active site. His235 is a substrate binding site.

This sequence belongs to the AB hydrolase superfamily. Carboxylesterase BioH family. Monomer.

It is found in the cytoplasm. The enzyme catalyses 6-carboxyhexanoyl-[ACP] methyl ester + H2O = 6-carboxyhexanoyl-[ACP] + methanol + H(+). The protein operates within cofactor biosynthesis; biotin biosynthesis. Functionally, the physiological role of BioH is to remove the methyl group introduced by BioC when the pimeloyl moiety is complete. It allows to synthesize pimeloyl-ACP via the fatty acid synthetic pathway through the hydrolysis of the ester bonds of pimeloyl-ACP esters. This is Pimeloyl-[acyl-carrier protein] methyl ester esterase from Salmonella agona (strain SL483).